We begin with the raw amino-acid sequence, 427 residues long: Endothelin-1 receptor (427 aa).

A signal peptide spans 1 to 20 (METFWLRLSFWVALVGGVIS). At 21–80 (DNPESYSTNLSIHVDSVATFHGTELSFVVTTHQPTNLALPSNGSMHNYCPQQTKITSAFK) the chain is on the extracellular side. Residues N29 and N62 are each glycosylated (N-linked (GlcNAc...) asparagine). The chain crosses the membrane as a helical span at residues 81 to 102 (YINTVISCTIFIVGMVGNATLL). Over 103-112 (RIIYQNKCMR) the chain is Cytoplasmic. The chain crosses the membrane as a helical span at residues 113 to 132 (NGPNALIASLALGDLIYVVI). Residues 133–159 (DLPINVFKLLAGRWPFEQNDFGVFLCK) are Extracellular-facing. A disulfide bridge links C158 with C239. Residues 160 to 181 (LFPFLQKSSVGITVLNLCALSV) traverse the membrane as a helical segment. The Cytoplasmic portion of the chain corresponds to 182-205 (DRYRAVASWSRVQGIGIPLVTAIE). The helical transmembrane segment at 206-229 (IVSIWILSFILAIPEAIGFVMVPF) threads the bilayer. Residues 230–256 (EYKGAQHRTCMLNATSKFMEFYQDVKD) are Extracellular-facing. A helical transmembrane segment spans residues 257–278 (WWLFGFYFCMPLVCTAIFYTLM). Residues 279 to 306 (TCEMLNRRNGSLRIALSEHLKQRREVAK) are Cytoplasmic-facing. The helical transmembrane segment at 307–328 (TVFCLVVIFALCWFPLHLSRIL) threads the bilayer. At 329–347 (KKTVYDEMDTNRCELLSFL) the chain is on the extracellular side. Residues 348-372 (LLMDYIGINLATMNSCINPIALYFV) form a helical membrane-spanning segment. The Cytoplasmic portion of the chain corresponds to 373–427 (SKKFKNCFQSCLCCCCYQSKSLMTSVPMNGTSIQWKNHEQNNHNTERSSHKDSIN). Phosphoserine is present on S425.

The protein belongs to the G-protein coupled receptor 1 family. Endothelin receptor subfamily. EDNRA sub-subfamily. In terms of assembly, interacts with HDAC7 and KAT5.

It is found in the cell membrane. Receptor for endothelin-1. Mediates its action by association with G proteins that activate a phosphatidylinositol-calcium second messenger system. The rank order of binding affinities for ET-A is: ET1 &gt; ET2 &gt;&gt; ET3. The polypeptide is Endothelin-1 receptor (Bos taurus (Bovine)).